A 402-amino-acid chain; its full sequence is Tryptophan synthase beta chain (402 aa).

N6-(pyridoxal phosphate)lysine is present on lysine 91.

The protein belongs to the TrpB family. In terms of assembly, tetramer of two alpha and two beta chains. Pyridoxal 5'-phosphate is required as a cofactor.

The catalysed reaction is (1S,2R)-1-C-(indol-3-yl)glycerol 3-phosphate + L-serine = D-glyceraldehyde 3-phosphate + L-tryptophan + H2O. It functions in the pathway amino-acid biosynthesis; L-tryptophan biosynthesis; L-tryptophan from chorismate: step 5/5. Its function is as follows. The beta subunit is responsible for the synthesis of L-tryptophan from indole and L-serine. This is Tryptophan synthase beta chain from Streptococcus thermophilus (strain ATCC BAA-491 / LMD-9).